The following is a 56-amino-acid chain: Serine protease inhibitor Kazal-type 1 (56 aa).

Positions 3–56 constitute a Kazal-like domain; the sequence is PQREATCTSEVSGCPKIYNPVCGTDGITYSNECVLCSENKKRQTPVLIQKSGPC. 3 disulfides stabilise this stretch: Cys9–Cys38, Cys16–Cys35, and Cys24–Cys56.

It is found in the secreted. Functionally, serine protease inhibitor which exhibits anti-trypsin activity. In the pancreas, protects against trypsin-catalyzed premature activation of zymogens. In terms of biological role, in the male reproductive tract, binds to sperm heads where it modulates sperm capacitance by inhibiting calcium uptake and nitrogen oxide (NO) production. This is Serine protease inhibitor Kazal-type 1 (SPINK1) from Sus scrofa (Pig).